We begin with the raw amino-acid sequence, 66 residues long: Large ribosomal subunit protein bL31 (66 aa).

Zn(2+)-binding residues include Cys-16, Cys-18, Cys-36, and Cys-39.

The protein belongs to the bacterial ribosomal protein bL31 family. Type A subfamily. Part of the 50S ribosomal subunit. Requires Zn(2+) as cofactor.

Binds the 23S rRNA. This Bacillus licheniformis (strain ATCC 14580 / DSM 13 / JCM 2505 / CCUG 7422 / NBRC 12200 / NCIMB 9375 / NCTC 10341 / NRRL NRS-1264 / Gibson 46) protein is Large ribosomal subunit protein bL31.